A 107-amino-acid chain; its full sequence is MSITLSDSAAARVSSFLENRGKGYGLRLGVRTSGCSGMAYVLEFVDEPATDDTVFEDKGVKVVIDGKSLQFLDGTQLDFVKEGLNEGFKFTNPNVKDECGCGESFHV.

Residues C35, C99, and C101 each coordinate Fe cation.

This sequence belongs to the HesB/IscA family. As to quaternary structure, homodimer; may form tetramers and higher multimers. It depends on Fe cation as a cofactor.

Is able to transfer iron-sulfur clusters to apo-ferredoxin. Multiple cycles of [2Fe2S] cluster formation and transfer are observed, suggesting that IscA acts catalytically. Recruits intracellular free iron so as to provide iron for the assembly of transient iron-sulfur cluster in IscU in the presence of IscS, L-cysteine and the thioredoxin reductase system TrxA/TrxB. The polypeptide is Iron-binding protein IscA (Enterobacter sp. (strain 638)).